We begin with the raw amino-acid sequence, 964 residues long: SKI family transcriptional corepressor 1 (964 aa).

Disordered regions lie at residues 45-72 (TQLG…SSAL), 278-365 (RTFS…GGSA), 414-461 (AGEP…WGHQ), 525-587 (AGGG…RKSS), 610-768 (REAY…GAAK), and 794-842 (LCTP…EDGL). Positions 283 to 310 (QGGGGGGANSGSGGAGKGGAGGGGGPGC) are enriched in gly residues. The segment covering 345 to 355 (ALGLAAAASGP) has biased composition (low complexity). Gly residues-rich tracts occupy residues 356-365 (AGPGGPGGSA) and 417-440 (PKGG…GPGA). Residues 571–583 (SLGPLPPPPPPPA) show a composition bias toward pro residues. A compositionally biased stretch (acidic residues) spans 652-661 (DTADEPEVDV). Residues 798 to 808 (ETHEPDKEDNH) are compositionally biased toward basic and acidic residues. Residues 823 to 834 (DQRSVSQPSPAN) are compositionally biased toward polar residues. A coiled-coil region spans residues 853-921 (EKDIENLARE…DTLCNELDQE (69 aa)).

It belongs to the SKI family. Interacts with SMAD1, SMAD2 and SMAD3. Interacts with LBX1. In terms of tissue distribution, expressed in brain with higher levels in embryo than adult. Expressed by migratory precursors of Purkinje cells in the postnatal brain. Also expressed in adult testis.

Its subcellular location is the nucleus. Inhibits BMP signaling. Acts as a transcriptional corepressor of LBX1. The polypeptide is SKI family transcriptional corepressor 1 (Skor1) (Mus musculus (Mouse)).